Here is a 159-residue protein sequence, read N- to C-terminus: Large ribosomal subunit protein uL15 (159 aa).

Positions 1 to 18 (MKLNEIRDNEGSSKDRIR) are enriched in basic and acidic residues. Positions 1–37 (MKLNEIRDNEGSSKDRIRVGRGIGSGKGKTGGRGVKG) are disordered. Positions 21 to 35 (RGIGSGKGKTGGRGV) are enriched in gly residues.

It belongs to the universal ribosomal protein uL15 family. In terms of assembly, part of the 50S ribosomal subunit.

Its function is as follows. Binds to the 23S rRNA. In Agrobacterium fabrum (strain C58 / ATCC 33970) (Agrobacterium tumefaciens (strain C58)), this protein is Large ribosomal subunit protein uL15.